Reading from the N-terminus, the 172-residue chain is Ribosome maturation factor RimM (172 aa).

Residues 96–168 enclose the PRC barrel domain; the sequence is EGEFYYHQII…RVDVELMEGL (73 aa).

It belongs to the RimM family. As to quaternary structure, binds ribosomal protein uS19.

Its subcellular location is the cytoplasm. Its function is as follows. An accessory protein needed during the final step in the assembly of 30S ribosomal subunit, possibly for assembly of the head region. Essential for efficient processing of 16S rRNA. May be needed both before and after RbfA during the maturation of 16S rRNA. It has affinity for free ribosomal 30S subunits but not for 70S ribosomes. The protein is Ribosome maturation factor RimM of Streptococcus pyogenes serotype M18 (strain MGAS8232).